The chain runs to 128 residues: MDYINAIGRRKAAVARVYLSEGSGKIVINKREIEQYFPSSILQYIVKQPLLKLDVAAKYDIKINLRGGGFKGQSEAARLAIARALVKINPDDKPALRSEGFITRDPRVVERKKPGRPKARKRFQFSKR.

A disordered region spans residues 106 to 128 (PRVVERKKPGRPKARKRFQFSKR). Residues 113 to 128 (KPGRPKARKRFQFSKR) are compositionally biased toward basic residues.

This sequence belongs to the universal ribosomal protein uS9 family.

The polypeptide is Small ribosomal subunit protein uS9 (Porphyromonas gingivalis (strain ATCC 33277 / DSM 20709 / CIP 103683 / JCM 12257 / NCTC 11834 / 2561)).